Reading from the N-terminus, the 162-residue chain is Ribonuclease P protein component (162 aa).

The segment at 1–67 is disordered; sequence MDEKDLAAQP…GGKLVSLKGD (67 aa). Over residues 21 to 31 the composition is skewed to basic and acidic residues; that stretch reads GPHEDPRRQEG.

The protein belongs to the RnpA family. In terms of assembly, consists of a catalytic RNA component (M1 or rnpB) and a protein subunit.

The catalysed reaction is Endonucleolytic cleavage of RNA, removing 5'-extranucleotides from tRNA precursor.. RNaseP catalyzes the removal of the 5'-leader sequence from pre-tRNA to produce the mature 5'-terminus. It can also cleave other RNA substrates such as 4.5S RNA. The protein component plays an auxiliary but essential role in vivo by binding to the 5'-leader sequence and broadening the substrate specificity of the ribozyme. This Thermus brockianus protein is Ribonuclease P protein component.